The following is a 1893-amino-acid chain: Nestin (1893 aa).

Met-1 bears the N-acetylmethionine mark. The segment at 1-7 (MEGCVGE) is head. The interval 8–43 (ESFQMWELNRRLEAYLTRVKTLEEQNQLLSAELGGL) is coil 1A. An IF rod domain is found at 8-314 (ESFQMWELNR…TLLEAENSRL (307 aa)). The interval 44-55 (RAQSGDTSWRAR) is linker 1. The tract at residues 56-151 (ADDELASLRI…AAHEEERAHL (96 aa)) is coil 1B. The segment at 150–172 (HLNAQAACAPRRPPAPPHGSPVR) is disordered. The segment at 152–174 (NAQAACAPRRPPAPPHGSPVRAP) is linker 12. The tract at residues 175–193 (EVEDLARRLGEVWRGAVRD) is coil 2A. The interval 194–196 (YQE) is linker 2. The coil 2B stretch occupies residues 197–314 (RVAHMESSLG…TLLEAENSRL (118 aa)). A Phosphoserine modification is found at Ser-312. A tail region spans residues 315–1893 (QTPGRGSQAS…DGDSWSSGED (1579 aa)). Thr-316 bears the Phosphothreonine mark. Ser-356 and Ser-359 each carry phosphoserine. Thr-389 carries the phosphothreonine modification. Disordered stretches follow at residues 437-479 (PELE…SGSR), 507-529 (NSSA…SQGP), and 556-879 (KENC…NQKS). A compositionally biased stretch (polar residues) spans 507-517 (NSSAQKTQESG). Residue Ser-562 is modified to Phosphoserine. 2 stretches are compositionally biased toward basic and acidic residues: residues 572–595 (GPEK…EKTL) and 606–615 (LGKEDTRTED). Ser-620 is modified (phosphoserine). Composition is skewed to basic and acidic residues over residues 634–646 (ESQE…KEGN) and 670–681 (MLERLVEKEDQS). Residues Ser-685 and Ser-729 each carry the phosphoserine modification. 4 stretches are compositionally biased toward basic and acidic residues: residues 717–730 (RLIE…LRSP), 761–774 (RLIE…LRSA), 802–818 (ILER…LRSP), and 846–879 (MLER…NQKS). Ser-817 carries the phosphoserine modification. Ser-903 is modified (phosphoserine). 2 stretches are compositionally biased toward basic and acidic residues: residues 949-966 (LLED…DRNG) and 989-1051 (QRIV…KSLE). The disordered stretch occupies residues 949 to 1130 (LLEDKTHKSL…ARSLGKENQE (182 aa)). Phosphoserine is present on residues Ser-1005 and Ser-1049. A Glycyl lysine isopeptide (Lys-Gly) (interchain with G-Cter in SUMO1); alternate cross-link involves residue Lys-1136. Lys-1136 participates in a covalent cross-link: Glycyl lysine isopeptide (Lys-Gly) (interchain with G-Cter in SUMO2); alternate. A phosphoserine mark is found at Ser-1145 and Ser-1166. The interval 1155 to 1222 (ETAEEDLERR…ELSSLGKWNV (68 aa)) is disordered. Positions 1198–1212 (DENRETLTSLEKESQ) are enriched in basic and acidic residues. Ser-1216 and Ser-1229 each carry phosphoserine. The segment at 1237–1263 (EGLQEEQHQESLREVKQELPSSGNQQR) is disordered. A compositionally biased stretch (basic and acidic residues) spans 1241-1253 (EEQHQESLREVKQ). Ser-1322 is modified (phosphoserine). Disordered stretches follow at residues 1336-1369 (DNLE…EQDS) and 1388-1824 (EVVG…SEQV). Basic and acidic residues-rich tracts occupy residues 1354–1363 (VTERDEDRAQ) and 1393–1403 (EDPRHFAREEA). Acidic residues-rich tracts occupy residues 1458-1469 (ESMEGWEEEEAS) and 1561-1576 (QDWE…DDLG). Phosphoserine occurs at positions 1570, 1594, 1686, 1695, 1772, and 1774. The segment covering 1688–1709 (GFADEEESGEEGEEEDADEEGA) has biased composition (acidic residues). A compositionally biased stretch (acidic residues) spans 1773–1788 (GSEESESASLEGEEGQ). Positions 1815–1824 (QSPNLDSEQV) are enriched in polar residues. 3 positions are modified to phosphoserine: Ser-1866, Ser-1889, and Ser-1890. The disordered stretch occupies residues 1870 to 1893 (LGPSQPLKFTLSGVDGDSWSSGED).

It belongs to the intermediate filament family. Forms homodimers and homotetramers in vitro. In mixtures with other intermediate filament proteins such as vimentin and alpha-internexin, this protein preferentially forms heterodimers which can assemble to form intermediate filaments if nestin does not exceed 25%. Interacts with FHOD3. In terms of processing, constitutively phosphorylated. This increases during mitosis when the cytoplasmic intermediate filament network is reorganized. As to expression, CNS stem cells.

In terms of biological role, required for brain and eye development. Promotes the disassembly of phosphorylated vimentin intermediate filaments (IF) during mitosis and may play a role in the trafficking and distribution of IF proteins and other cellular factors to daughter cells during progenitor cell division. Required for survival, renewal and mitogen-stimulated proliferation of neural progenitor cells. The protein is Nestin (Nes) of Rattus norvegicus (Rat).